A 633-amino-acid chain; its full sequence is Phosphomethylpyrimidine synthase (633 aa).

The span at Met-1 to Ala-13 shows a compositional bias: polar residues. The interval Met-1–Ser-22 is disordered. Residues Asn-221, Met-250, Tyr-279, His-315, Ser-335–Gly-337, Asp-376–Arg-379, and Glu-415 each bind substrate. His-419 is a Zn(2+) binding site. Tyr-442 contacts substrate. A Zn(2+)-binding site is contributed by His-483. Positions 563, 566, and 571 each coordinate [4Fe-4S] cluster.

It belongs to the ThiC family. Homodimer. The cofactor is [4Fe-4S] cluster.

The enzyme catalyses 5-amino-1-(5-phospho-beta-D-ribosyl)imidazole + S-adenosyl-L-methionine = 4-amino-2-methyl-5-(phosphooxymethyl)pyrimidine + CO + 5'-deoxyadenosine + formate + L-methionine + 3 H(+). It functions in the pathway cofactor biosynthesis; thiamine diphosphate biosynthesis. Functionally, catalyzes the synthesis of the hydroxymethylpyrimidine phosphate (HMP-P) moiety of thiamine from aminoimidazole ribotide (AIR) in a radical S-adenosyl-L-methionine (SAM)-dependent reaction. The polypeptide is Phosphomethylpyrimidine synthase (Bradyrhizobium sp. (strain BTAi1 / ATCC BAA-1182)).